Here is a 332-residue protein sequence, read N- to C-terminus: MKTLGEFIVEKQHEFSQATGELTALLSAIKLGAKIIHRDINKAGLVDILGASCAENVQGEVQQKLDLFANEKLKAALKARDIVAGIASEEEDEIVVFEGCEHAKYVVLMDPLDGSSNIDVNVSVGTIFSIYRRVTPVGTPVTEEDFLQPGNKQVAAGYVVYGSSTMLIYTTGCGVHAFTYDPSLGVFCLCQERMRFPEKGKTYSINEGNYIKFPNGVKKYIKFCQEEDSSTSRPYTSRYIGSLVADFHRNLLKGGIYLYPSTASHPQGKLRLLYECNPMAFLAEQAGGKASDGKERILDIIPESLHQRRSFFVGNRHMVDDVERFIREYPDA.

4 residues coordinate Mg(2+): Glu89, Asp110, Leu112, and Asp113. Residues 113–116 (DGSS), Asn206, Tyr239, 257–259 (YLY), and Lys269 contribute to the substrate site. Glu275 is a binding site for Mg(2+).

Belongs to the FBPase class 1 family. As to quaternary structure, homotetramer. Requires Mg(2+) as cofactor.

It localises to the cytoplasm. The enzyme catalyses beta-D-fructose 1,6-bisphosphate + H2O = beta-D-fructose 6-phosphate + phosphate. It functions in the pathway carbohydrate biosynthesis; gluconeogenesis. The protein is Fructose-1,6-bisphosphatase class 1 of Salmonella typhi.